A 170-amino-acid polypeptide reads, in one-letter code: 4-hydroxyphenylacetate 3-monooxygenase reductase component (170 aa).

This sequence belongs to the non-flavoprotein flavin reductase family. HpaC subfamily. In terms of assembly, homodimer. 4-HPA 3-monooxygenase consists of a reductase component HpaC and an oxygenase component HpaB.

It carries out the reaction a reduced flavin + NAD(+) = an oxidized flavin + NADH + 2 H(+). It functions in the pathway aromatic compound metabolism; 4-hydroxyphenylacetate degradation; pyruvate and succinate semialdehyde from 4-hydroxyphenylacetate: step 1/7. In terms of biological role, catalyzes the reduction of free flavins (FMN, FAD and riboflavin) by NADH. Subsequently, the reduced flavins diffuse to the large HpaB component or to other electron acceptors such as cytochrome c and Fe(3+) ion. The polypeptide is 4-hydroxyphenylacetate 3-monooxygenase reductase component (hpaC) (Escherichia coli).